The following is a 321-amino-acid chain: tRNA(Ile)-lysidine synthase (321 aa).

S30–S35 is a binding site for ATP.

This sequence belongs to the tRNA(Ile)-lysidine synthase family.

The protein localises to the cytoplasm. It carries out the reaction cytidine(34) in tRNA(Ile2) + L-lysine + ATP = lysidine(34) in tRNA(Ile2) + AMP + diphosphate + H(+). Its function is as follows. Ligates lysine onto the cytidine present at position 34 of the AUA codon-specific tRNA(Ile) that contains the anticodon CAU, in an ATP-dependent manner. Cytidine is converted to lysidine, thus changing the amino acid specificity of the tRNA from methionine to isoleucine. The protein is tRNA(Ile)-lysidine synthase of Chlamydia trachomatis serovar L2 (strain ATCC VR-902B / DSM 19102 / 434/Bu).